We begin with the raw amino-acid sequence, 300 residues long: Enoyl-CoA hydratase domain-containing protein 3, mitochondrial (300 aa).

The transit peptide at 1–66 (MALVAGLRAF…RNIVLSNPRR (66 aa)) directs the protein to the mitochondrion. The segment at 32–54 (SPGSARPAGPESEPRLTSTRQQD) is disordered. Lys110 carries the N6-succinyllysine modification.

Belongs to the enoyl-CoA hydratase/isomerase family.

The protein resides in the mitochondrion. Functionally, may play a role in fatty acid biosynthesis and insulin sensitivity. This Rattus norvegicus (Rat) protein is Enoyl-CoA hydratase domain-containing protein 3, mitochondrial.